We begin with the raw amino-acid sequence, 600 residues long: Aspartate--tRNA(Asp/Asn) ligase (600 aa).

Residue glutamate 183 coordinates L-aspartate. The interval 207-210 is aspartate; that stretch reads QLFK. Residue arginine 229 coordinates L-aspartate. Residues 229–231 and glutamine 238 contribute to the ATP site; that span reads RDE. Histidine 456 serves as a coordination point for L-aspartate. Glutamate 490 is a binding site for ATP. Arginine 497 contributes to the L-aspartate binding site. 542–545 lines the ATP pocket; sequence GLDR.

This sequence belongs to the class-II aminoacyl-tRNA synthetase family. Type 1 subfamily. Homodimer.

It is found in the cytoplasm. The catalysed reaction is tRNA(Asx) + L-aspartate + ATP = L-aspartyl-tRNA(Asx) + AMP + diphosphate. In terms of biological role, aspartyl-tRNA synthetase with relaxed tRNA specificity since it is able to aspartylate not only its cognate tRNA(Asp) but also tRNA(Asn). Reaction proceeds in two steps: L-aspartate is first activated by ATP to form Asp-AMP and then transferred to the acceptor end of tRNA(Asp/Asn). The sequence is that of Aspartate--tRNA(Asp/Asn) ligase from Moorella thermoacetica (strain ATCC 39073 / JCM 9320).